Consider the following 898-residue polypeptide: DNA gyrase subunit A (898 aa).

Disordered stretches follow at residues 1 to 22 and 36 to 56; these read MSDD…DDDS and EEEK…EKEG. In terms of domain architecture, Topo IIA-type catalytic spans 97 to 562; that stretch reads LPDARDGLKP…VMSSINNEDL (466 aa). Y185 (O-(5'-phospho-DNA)-tyrosine intermediate) is an active-site residue. The short motif at 589–595 is the GyrA-box element; it reads QRRGGVG.

This sequence belongs to the type II topoisomerase GyrA/ParC subunit family. Heterotetramer, composed of two GyrA and two GyrB chains. In the heterotetramer, GyrA contains the active site tyrosine that forms a transient covalent intermediate with DNA, while GyrB binds cofactors and catalyzes ATP hydrolysis.

It localises to the cytoplasm. It catalyses the reaction ATP-dependent breakage, passage and rejoining of double-stranded DNA.. Functionally, a type II topoisomerase that negatively supercoils closed circular double-stranded (ds) DNA in an ATP-dependent manner to modulate DNA topology and maintain chromosomes in an underwound state. Negative supercoiling favors strand separation, and DNA replication, transcription, recombination and repair, all of which involve strand separation. Also able to catalyze the interconversion of other topological isomers of dsDNA rings, including catenanes and knotted rings. Type II topoisomerases break and join 2 DNA strands simultaneously in an ATP-dependent manner. In Metamycoplasma arthritidis (strain 158L3-1) (Mycoplasma arthritidis), this protein is DNA gyrase subunit A.